A 125-amino-acid chain; its full sequence is Subtelomeric hrmA-associated cluster protein cgnA (125 aa).

23 G-Q-I/R/S repeats span residues 11 to 13 (GQI), 14 to 16 (GPI), 17 to 19 (GQR), 20 to 22 (GQS), 23 to 25 (GQR), 26 to 28 (GQS), 29 to 31 (GQR), 32 to 34 (GQS), 35 to 37 (GQI), 38 to 40 (GQS), 41 to 43 (GQS), 44 to 46 (GQS), 47 to 49 (GQS), 50 to 52 (GQS), 53 to 55 (GQI), 56 to 58 (GQI), 59 to 61 (GQI), 62 to 64 (GQI), 65 to 67 (GQI), 68 to 70 (GQI), 71 to 73 (GQI), 74 to 76 (GQI), and 77 to 79 (GQA). Residues 11 to 79 (GQIGPIGQRG…IGQIGQIGQA (69 aa)) form a 23 X 3 AA approximate tandem repeats of G-Q-I/R/S region. The tract at residues 15 to 57 (PIGQRGQSGQRGQSGQRGQSGQIGQSGQSGQSGQSGQSGQIGQ) is disordered.

The protein resides in the secreted. Its function is as follows. Hypoxia responsive morphology factor that modulates the expression of the subtelomeric hrmA-associated cluster (HAC) containing genes that alter the hyphal surface (such as reduced total chitin or increased beta-glucan exposure) and perturb inter-hyphal interactions within the developing biofilms, resulting in a loss of vertically aligned polarized growing filaments. Consequently, this hypoxia-typic morphotype (called H-MORPH) with altered biofilm architecture leads to increased hypoxia fitness, increased host inflammation, rapid disease progression, and mortality in a murine model of invasive aspergillosis. GcnA is directly involved in the reduction total surface chitin and the increase beta-glucan exposure, and mediates the detachment of the extracellular matrix and especially of its component galactosaminogalactan (GAG). The polypeptide is Subtelomeric hrmA-associated cluster protein cgnA (Aspergillus fumigatus (strain CBS 144.89 / FGSC A1163 / CEA10) (Neosartorya fumigata)).